We begin with the raw amino-acid sequence, 587 residues long: GATA zinc finger domain-containing protein 3 (587 aa).

The segment covering 53 to 74 (NINNNINNNNNNNNNNNNNNIN) has biased composition (low complexity). 3 disordered regions span residues 53–141 (NINN…LKIP), 179–294 (QLAH…SSPS), and 312–392 (QTSP…ATIN). The span at 75-86 (QYHQNHYDQYSD) shows a compositional bias: polar residues. Composition is skewed to low complexity over residues 87 to 136 (NNCN…NNNN), 183 to 202 (NSSM…TPTS), 237 to 264 (NING…INNG), 272 to 292 (GNNN…NSSS), and 316 to 333 (SQQS…QQSQ). Composition is skewed to polar residues over residues 340-358 (INTT…TNSP) and 365-379 (NESS…TPLS). Residues 500-525 (CIFCGTMETPEWRKGPGGHKTLCNAC) form a GATA-type zinc finger. A disordered region spans residues 536–587 (ENQNNGGSPNPQQNNVTTTTTTTTSTSTNSPNSNGNNFSPESAMSVSKLISD). The segment covering 538 to 575 (QNNGGSPNPQQNNVTTTTTTTTSTSTNSPNSNGNNFSP) has biased composition (low complexity). Positions 577-587 (SAMSVSKLISD) are enriched in polar residues.

The sequence is that of GATA zinc finger domain-containing protein 3 (gtaC) from Dictyostelium discoideum (Social amoeba).